Here is a 154-residue protein sequence, read N- to C-terminus: Metallothiol transferase FosB (154 aa).

Positions 8–123 (GINHLLFSVS…DGHKFELHTG (116 aa)) constitute a VOC domain. The Mg(2+) site is built by histidine 11, histidine 70, and glutamate 119. The Proton donor/acceptor role is filled by glutamate 119.

Belongs to the fosfomycin resistance protein family. FosB subfamily. In terms of assembly, homodimer. Requires Mg(2+) as cofactor.

Its subcellular location is the cytoplasm. Its function is as follows. Metallothiol transferase which confers resistance to fosfomycin by catalyzing the addition of a thiol cofactor to fosfomycin. L-cysteine is probably the physiological thiol donor. The protein is Metallothiol transferase FosB of Bacillus licheniformis (strain ATCC 14580 / DSM 13 / JCM 2505 / CCUG 7422 / NBRC 12200 / NCIMB 9375 / NCTC 10341 / NRRL NRS-1264 / Gibson 46).